The chain runs to 248 residues: tRNA1(Val) (adenine(37)-N6)-methyltransferase (248 aa).

It belongs to the methyltransferase superfamily. tRNA (adenine-N(6)-)-methyltransferase family.

Its subcellular location is the cytoplasm. It carries out the reaction adenosine(37) in tRNA1(Val) + S-adenosyl-L-methionine = N(6)-methyladenosine(37) in tRNA1(Val) + S-adenosyl-L-homocysteine + H(+). Its function is as follows. Specifically methylates the adenine in position 37 of tRNA(1)(Val) (anticodon cmo5UAC). The chain is tRNA1(Val) (adenine(37)-N6)-methyltransferase from Musicola paradisiaca (strain Ech703) (Dickeya paradisiaca).